The chain runs to 441 residues: Dolichyl-diphosphooligosaccharide--protein glycosyltransferase 48 kDa subunit (441 aa).

An N-terminal signal peptide occupies residues 1–28 (MKMVPRLAVRAWPLCGLLLAALGCVCAS). At 29 to 412 (GPRTLVLLDN…YERFIPSAYP (384 aa)) the chain is on the lumenal side. The chain crosses the membrane as a helical span at residues 413–432 (YYASAFSMMAGLFLFSVVFL). The Cytoplasmic portion of the chain corresponds to 433 to 441 (HMKEKEKSD).

The protein belongs to the DDOST 48 kDa subunit family. In terms of assembly, component of the oligosaccharyltransferase (OST) complex. OST exists in two different complex forms which contain common core subunits RPN1, RPN2, OST48, OST4, DAD1 and TMEM258, either STT3A or STT3B as catalytic subunits, and form-specific accessory subunits. STT3A complex assembly occurs through the formation of 3 subcomplexes. Subcomplex 1 contains RPN1 and TMEM258, subcomplex 2 contains the STT3A-specific subunits STT3A, DC2/OSTC, and KCP2 as well as the core subunit OST4, and subcomplex 3 contains RPN2, DAD1, and OST48. The STT3A complex can form stable complexes with the Sec61 complex or with both the Sec61 and TRAP complexes. Interacts with SMIM22.

The protein resides in the endoplasmic reticulum membrane. Its pathway is protein modification; protein glycosylation. Functionally, subunit of the oligosaccharyl transferase (OST) complex that catalyzes the initial transfer of a defined glycan (Glc(3)Man(9)GlcNAc(2) in eukaryotes) from the lipid carrier dolichol-pyrophosphate to an asparagine residue within an Asn-X-Ser/Thr consensus motif in nascent polypeptide chains, the first step in protein N-glycosylation. N-glycosylation occurs cotranslationally and the complex associates with the Sec61 complex at the channel-forming translocon complex that mediates protein translocation across the endoplasmic reticulum (ER). All subunits are required for a maximal enzyme activity. Required for the assembly of both SST3A- and SS3B-containing OST complexes. The sequence is that of Dolichyl-diphosphooligosaccharide--protein glycosyltransferase 48 kDa subunit from Rattus norvegicus (Rat).